We begin with the raw amino-acid sequence, 110 residues long: Senescence associated gene 20 (110 aa).

The protein is Senescence associated gene 20 of Arabidopsis thaliana (Mouse-ear cress).